A 456-amino-acid polypeptide reads, in one-letter code: Bifunctional protein GlmU (456 aa).

Positions 1–229 are pyrophosphorylase; the sequence is MLNSAMSVVI…ISETDGVNNR (229 aa). UDP-N-acetyl-alpha-D-glucosamine contacts are provided by residues 11 to 14, Lys25, Gln76, 81 to 82, 103 to 105, Gly140, Glu154, Asn169, and Asn227; these read LAAG, GT, and YGD. Residue Asp105 coordinates Mg(2+). Residue Asn227 participates in Mg(2+) binding. Residues 230–250 form a linker region; the sequence is LQLSRLERIYQAEQAEKLLLS. The segment at 251–456 is N-acetyltransferase; sequence GVMLRDPARF…QGWQRPVKKK (206 aa). Positions 333 and 351 each coordinate UDP-N-acetyl-alpha-D-glucosamine. The active-site Proton acceptor is the His363. Tyr366 and Asn377 together coordinate UDP-N-acetyl-alpha-D-glucosamine. Acetyl-CoA-binding positions include Ala380, 386–387, Ser405, Ala423, and Arg440; that span reads NY.

The protein in the N-terminal section; belongs to the N-acetylglucosamine-1-phosphate uridyltransferase family. This sequence in the C-terminal section; belongs to the transferase hexapeptide repeat family. In terms of assembly, homotrimer. The cofactor is Mg(2+).

It localises to the cytoplasm. It catalyses the reaction alpha-D-glucosamine 1-phosphate + acetyl-CoA = N-acetyl-alpha-D-glucosamine 1-phosphate + CoA + H(+). The catalysed reaction is N-acetyl-alpha-D-glucosamine 1-phosphate + UTP + H(+) = UDP-N-acetyl-alpha-D-glucosamine + diphosphate. The protein operates within nucleotide-sugar biosynthesis; UDP-N-acetyl-alpha-D-glucosamine biosynthesis; N-acetyl-alpha-D-glucosamine 1-phosphate from alpha-D-glucosamine 6-phosphate (route II): step 2/2. It functions in the pathway nucleotide-sugar biosynthesis; UDP-N-acetyl-alpha-D-glucosamine biosynthesis; UDP-N-acetyl-alpha-D-glucosamine from N-acetyl-alpha-D-glucosamine 1-phosphate: step 1/1. It participates in bacterial outer membrane biogenesis; LPS lipid A biosynthesis. Catalyzes the last two sequential reactions in the de novo biosynthetic pathway for UDP-N-acetylglucosamine (UDP-GlcNAc). The C-terminal domain catalyzes the transfer of acetyl group from acetyl coenzyme A to glucosamine-1-phosphate (GlcN-1-P) to produce N-acetylglucosamine-1-phosphate (GlcNAc-1-P), which is converted into UDP-GlcNAc by the transfer of uridine 5-monophosphate (from uridine 5-triphosphate), a reaction catalyzed by the N-terminal domain. The protein is Bifunctional protein GlmU of Salmonella typhi.